A 373-amino-acid polypeptide reads, in one-letter code: Glutamine synthetase (373 aa).

Ala-2 is subject to N-acetylalanine. Residues 2 to 25 (ATSASSHLNKGIKQMYMNLPQGEK) form a required for glutamine-induced ubiquitination by CRL4(CRBN) and proteasomal degradation region. N6-acetyllysine is present on residues Lys-11 and Lys-14. The GS beta-grasp domain occupies 24–106 (EKIQLMYIWV…VFCEVFKYNR (83 aa)). Tyr-104 carries the phosphotyrosine modification. One can recognise a GS catalytic domain in the interval 113-373 (LRHSCKRIMD…TGDEPFQYKN (261 aa)). Glu-134 serves as a coordination point for ATP. Mn(2+)-binding residues include Glu-134, Glu-136, Glu-196, and Glu-203. 203–208 (EFQIGP) provides a ligand contact to ATP. L-glutamate is bound at residue 246–247 (NW). His-253 lines the Mn(2+) pocket. Residues 255–257 (NFS), Arg-319, and Arg-324 each bind ATP. Arg-319 is an L-glutamate binding site. 336–338 (YFE) contacts ADP. Mn(2+) is bound at residue Glu-338. Arg-340 is an L-glutamate binding site. Ser-343 is subject to Phosphoserine.

The protein belongs to the glutamine synthetase family. Decamer; composed of two pentamers. Interacts with PALMD. Interacts with RHOJ. Interacts with BEST2; this interaction tethers a fraction of GLUL to the membrane, causing a decrease of cytosolic glutamine synthase (GS) activity and inhibits the chloride channel activity of BEST2 by affecting the gating at the aperture in the absence of intracellular glutamate. Mg(2+) is required as a cofactor. Mn(2+) serves as cofactor. Post-translationally, palmitoylated; undergoes autopalmitoylation. In terms of processing, acetylated by EP300/p300; acetylation is stimulated by increased glutamine levels and promotes ubiquitin-mediated proteasomal degradation. Ubiquitinated by ZNRF1. Ubiquitinated by the DCX (DDB1-CUL4-X-box) E3 ubiquitin-protein ligase complex called CRL4(CRBN), leading to proteasomal degradation. In terms of tissue distribution, in the adult liver, expression is restricted to a small population of hepatocytes which form only a small rim of one to three hepatocytes around the central veins. Expressed in lung microvascular endothelial cells.

The protein resides in the cytoplasm. The protein localises to the cytosol. Its subcellular location is the microsome. It localises to the mitochondrion. It is found in the cell membrane. The enzyme catalyses L-glutamate + NH4(+) + ATP = L-glutamine + ADP + phosphate + H(+). It catalyses the reaction L-cysteinyl-[protein] + hexadecanoyl-CoA = S-hexadecanoyl-L-cysteinyl-[protein] + CoA. With respect to regulation, glutamine synthetase activity is inhibited by methionine sulfoximine (MSO). Glutamine synthetase that catalyzes the ATP-dependent conversion of glutamate and ammonia to glutamine. Its role depends on tissue localization: in the brain, it regulates the levels of toxic ammonia and converts neurotoxic glutamate to harmless glutamine, whereas in the liver, it is one of the enzymes responsible for the removal of ammonia. Plays a key role in ammonium detoxification during erythropoiesis: the glutamine synthetase activity is required to remove ammonium generated by porphobilinogen deaminase (HMBS) during heme biosynthesis to prevent ammonium accumulation and oxidative stress. Essential for proliferation of fetal skin fibroblasts. Independently of its glutamine synthetase activity, required for endothelial cell migration during vascular development. Involved in angiogenesis by regulating membrane localization and activation of the GTPase RHOJ, possibly by promoting RHOJ palmitoylation. May act as a palmitoyltransferase for RHOJ: able to autopalmitoylate and then transfer the palmitoyl group to RHOJ. Plays a role in ribosomal 40S subunit biogenesis. Through the interaction with BEST2, inhibits BEST2 channel activity by affecting the gating at the aperture in the absence of intracellular L-glutamate, but sensitizes BEST2 to intracellular L-glutamate, which promotes the opening of BEST2 and thus relieves its inhibitory effect on BEST2. The chain is Glutamine synthetase from Rattus norvegicus (Rat).